Reading from the N-terminus, the 199-residue chain is Tumor necrosis factor ligand superfamily member 4 (199 aa).

Topologically, residues 1 to 25 (MEGEGVQPPDENLENGSRPRFKWKK) are cytoplasmic. The chain crosses the membrane as a helical; Signal-anchor for type II membrane protein span at residues 26–48 (VLRLVVSGIKAAGLLLCVVYVCL). Over 49–199 (QFSSSPAKDS…YSSTVNQVPL (151 aa)) the chain is Extracellular. The THD domain maps to 59-176 (PIQRLRAPVT…QINDGELIIV (118 aa)). 2 disulfide bridges follow: Cys-70/Cys-163 and Cys-98/Cys-184. N-linked (GlcNAc...) asparagine glycosylation is found at Asn-91 and Asn-157.

It belongs to the tumor necrosis factor family. As to quaternary structure, homotrimer. In terms of tissue distribution, detected in T-cell lines, but not in a macrophage cell line.

It localises to the membrane. Cytokine that binds to TNFRSF4. Co-stimulates T-cell proliferation and cytokine production. This is Tumor necrosis factor ligand superfamily member 4 (Tnfsf4) from Rattus norvegicus (Rat).